The primary structure comprises 30 residues: Cyclotide cter-Q (30 aa).

The cyclopeptide (Gly-Asn) cross-link spans 1–30 (GIPCGESCVFIPCISTVIGCSCKNKVCYRN). Disulfide bonds link C4-C20, C8-C22, and C13-C27.

This is a cyclic peptide.

It localises to the secreted. Probably participates in a plant defense mechanism. This chain is Cyclotide cter-Q, found in Clitoria ternatea (Butterfly pea).